A 542-amino-acid chain; its full sequence is CTP synthase (542 aa).

Positions Met1 to Ile265 are amidoligase domain. Ser13 contacts CTP. Residue Ser13 coordinates UTP. Residues Ser14–Ile19 and Asp71 each bind ATP. 2 residues coordinate Mg(2+): Asp71 and Glu139. Residues Asp146–Glu148, Lys186–Gln191, and Lys222 contribute to the CTP site. Residues Lys186 to Gln191 and Lys222 contribute to the UTP site. A Glutamine amidotransferase type-1 domain is found at Thr291–Leu541. An L-glutamine-binding site is contributed by Gly353. The Nucleophile; for glutamine hydrolysis role is filled by Cys380. L-glutamine-binding positions include Phe381 to Gln384, Glu404, and Arg469. Catalysis depends on residues His514 and Glu516.

It belongs to the CTP synthase family. Homotetramer.

It carries out the reaction UTP + L-glutamine + ATP + H2O = CTP + L-glutamate + ADP + phosphate + 2 H(+). It catalyses the reaction L-glutamine + H2O = L-glutamate + NH4(+). The catalysed reaction is UTP + NH4(+) + ATP = CTP + ADP + phosphate + 2 H(+). It participates in pyrimidine metabolism; CTP biosynthesis via de novo pathway; CTP from UDP: step 2/2. Its activity is regulated as follows. Allosterically activated by GTP, when glutamine is the substrate; GTP has no effect on the reaction when ammonia is the substrate. The allosteric effector GTP functions by stabilizing the protein conformation that binds the tetrahedral intermediate(s) formed during glutamine hydrolysis. Inhibited by the product CTP, via allosteric rather than competitive inhibition. Its function is as follows. Catalyzes the ATP-dependent amination of UTP to CTP with either L-glutamine or ammonia as the source of nitrogen. Regulates intracellular CTP levels through interactions with the four ribonucleotide triphosphates. The polypeptide is CTP synthase (Sinorhizobium medicae (strain WSM419) (Ensifer medicae)).